Here is a 515-residue protein sequence, read N- to C-terminus: Zinc-binding protein AdcA (515 aa).

The first 28 residues, 1–28 (MKKKILLMMSLISVFFAWQLTQAKQVLA), serve as a signal peptide directing secretion. Residue His66 coordinates Zn(2+). The segment at 125 to 148 (DHHHEDADKKHEHNKHSEEGHNHA) is disordered. The segment at 129–148 (EDADKKHEHNKHSEEGHNHA) is his-rich loop. The Zn(2+) site is built by His152, His216, and Glu291.

Belongs to the bacterial solute-binding protein 9 family.

In terms of biological role, part of the ATP-binding cassette (ABC) transport system AdcABC involved in zinc import. Binds zinc with high affinity and specificity and delivers it to the membrane permease for translocation into the cytoplasm. This is Zinc-binding protein AdcA (adcA) from Streptococcus pyogenes serotype M1.